Consider the following 157-residue polypeptide: Small ribosomal subunit protein uS7 (157 aa).

Belongs to the universal ribosomal protein uS7 family. As to quaternary structure, part of the 30S ribosomal subunit. Contacts proteins S9 and S11.

Its function is as follows. One of the primary rRNA binding proteins, it binds directly to 16S rRNA where it nucleates assembly of the head domain of the 30S subunit. Is located at the subunit interface close to the decoding center, probably blocks exit of the E-site tRNA. In Blochmanniella floridana, this protein is Small ribosomal subunit protein uS7.